The following is a 126-amino-acid chain: Fluoride-specific ion channel FluC (126 aa).

4 helical membrane-spanning segments follow: residues 4-24 (FAIL…RYLV), 38-58 (YGTL…IAAF), 71-91 (IIGL…MDNV), and 104-124 (LNVV…FQLL). Residues Gly78 and Thr81 each contribute to the Na(+) site.

This sequence belongs to the fluoride channel Fluc/FEX (TC 1.A.43) family.

The protein resides in the cell inner membrane. The catalysed reaction is fluoride(in) = fluoride(out). Na(+) is not transported, but it plays an essential structural role and its presence is essential for fluoride channel function. Functionally, fluoride-specific ion channel. Important for reducing fluoride concentration in the cell, thus reducing its toxicity. This chain is Fluoride-specific ion channel FluC, found in Vibrio vulnificus (strain CMCP6).